The following is a 169-amino-acid chain: ATP synthase subunit b (169 aa).

The helical transmembrane segment at 12-32 (HIYLGNAIWYLLCFAILMLLI) threads the bilayer.

It belongs to the ATPase B chain family. In terms of assembly, F-type ATPases have 2 components, F(1) - the catalytic core - and F(0) - the membrane proton channel. F(1) has five subunits: alpha(3), beta(3), gamma(1), delta(1), epsilon(1). F(0) has three main subunits: a(1), b(2) and c(10-14). The alpha and beta chains form an alternating ring which encloses part of the gamma chain. F(1) is attached to F(0) by a central stalk formed by the gamma and epsilon chains, while a peripheral stalk is formed by the delta and b chains.

It is found in the cell membrane. Its activity is regulated as follows. Increases 2-fold following exposure to low pH. In terms of biological role, f(1)F(0) ATP synthase produces ATP from ADP in the presence of a proton or sodium gradient. F-type ATPases consist of two structural domains, F(1) containing the extramembraneous catalytic core and F(0) containing the membrane proton channel, linked together by a central stalk and a peripheral stalk. During catalysis, ATP synthesis in the catalytic domain of F(1) is coupled via a rotary mechanism of the central stalk subunits to proton translocation. Its function is as follows. Component of the F(0) channel, it forms part of the peripheral stalk, linking F(1) to F(0). This is ATP synthase subunit b from Lactobacillus acidophilus (strain ATCC 700396 / NCK56 / N2 / NCFM).